Reading from the N-terminus, the 635-residue chain is DNA mismatch repair protein MutL (635 aa).

It belongs to the DNA mismatch repair MutL/HexB family.

In terms of biological role, this protein is involved in the repair of mismatches in DNA. It is required for dam-dependent methyl-directed DNA mismatch repair. May act as a 'molecular matchmaker', a protein that promotes the formation of a stable complex between two or more DNA-binding proteins in an ATP-dependent manner without itself being part of a final effector complex. This chain is DNA mismatch repair protein MutL, found in Yersinia pestis bv. Antiqua (strain Angola).